The following is a 277-amino-acid chain: Membrane protein insertase YidC 2 (277 aa).

The signal sequence occupies residues 1–22 (MKKYRKILAMLAVLAIVLVLSG). Residue cysteine 23 is the site of N-palmitoyl cysteine attachment. The S-diacylglycerol cysteine moiety is linked to residue cysteine 23. Transmembrane regions (helical) follow at residues 35-55 (FWDG…SNLF), 60-80 (GLGI…LMIF), 130-150 (ASML…QAIW), 170-190 (PYYV…WLAM), and 208-228 (PVII…YWVI). Over residues 251–266 (EAKKQAERDRKRTLEK) the composition is skewed to basic and acidic residues. The segment at 251–277 (EAKKQAERDRKRTLEKARKRAIRNHKR) is disordered. Residues 267–277 (ARKRAIRNHKR) are compositionally biased toward basic residues.

It belongs to the OXA1/ALB3/YidC family. Type 2 subfamily.

The protein localises to the cell membrane. Required for the insertion and/or proper folding and/or complex formation of integral membrane proteins into the membrane. Involved in integration of membrane proteins that insert both dependently and independently of the Sec translocase complex, as well as at least some lipoproteins. This Lactiplantibacillus plantarum (strain ATCC BAA-793 / NCIMB 8826 / WCFS1) (Lactobacillus plantarum) protein is Membrane protein insertase YidC 2.